The sequence spans 387 residues: MSVIKMTDLDLAGKRVFIRADLNVPVKDGKVTSDARIRASLPTIELALKQGAKVMVTSHLGRPTEGEYNEEFSLLPVVNYLKDKLSNPVRLVKDYLDGVDVAEGELVVLENVRFNKGEKKDDETLSKKYAALCDVFVMDAFGTAHRAQASTHGIGKFADVACAGPLLAAELDALGKALKEPARPMVAIVGGSKVSTKLTVLDSLSKIADQLIVGGGIANTFIAAQGHDVGKSLYEADLVDEAKRLLTTCNIPVPSDVRVATEFSETAPATLKSVNDVKADEQILDIGDASAQELAEILKNAKTILWNGPVGVFEFPNFRKGTEIVANAIADSEAFSIAGGGDTLAAIDLFGIADKISYISTGGGAFLEFVEGKVLPAVAMLEERAKK.

Substrate contacts are provided by residues 21-23 (DLN), arginine 36, and 59-62 (HLGR). Lysine 84 carries the N6-acetyllysine modification. Residues arginine 113 and arginine 146 each coordinate substrate. ATP contacts are provided by residues lysine 197, glutamate 314, and 340-343 (GGDT).

Belongs to the phosphoglycerate kinase family. Monomer.

It is found in the cytoplasm. The catalysed reaction is (2R)-3-phosphoglycerate + ATP = (2R)-3-phospho-glyceroyl phosphate + ADP. It functions in the pathway carbohydrate degradation; glycolysis; pyruvate from D-glyceraldehyde 3-phosphate: step 2/5. The protein is Phosphoglycerate kinase of Escherichia coli O139:H28 (strain E24377A / ETEC).